The chain runs to 318 residues: Acetyl-coenzyme A carboxylase carboxyl transferase subunit alpha (318 aa).

One can recognise a CoA carboxyltransferase C-terminal domain in the interval 32–293; sequence DLSQEIESLE…KKALQKHLGE (262 aa).

The protein belongs to the AccA family. In terms of assembly, acetyl-CoA carboxylase is a heterohexamer composed of biotin carboxyl carrier protein (AccB), biotin carboxylase (AccC) and two subunits each of ACCase subunit alpha (AccA) and ACCase subunit beta (AccD).

The protein localises to the cytoplasm. It catalyses the reaction N(6)-carboxybiotinyl-L-lysyl-[protein] + acetyl-CoA = N(6)-biotinyl-L-lysyl-[protein] + malonyl-CoA. It participates in lipid metabolism; malonyl-CoA biosynthesis; malonyl-CoA from acetyl-CoA: step 1/1. Functionally, component of the acetyl coenzyme A carboxylase (ACC) complex. First, biotin carboxylase catalyzes the carboxylation of biotin on its carrier protein (BCCP) and then the CO(2) group is transferred by the carboxyltransferase to acetyl-CoA to form malonyl-CoA. This is Acetyl-coenzyme A carboxylase carboxyl transferase subunit alpha from Syntrophomonas wolfei subsp. wolfei (strain DSM 2245B / Goettingen).